The sequence spans 88 residues: RQC P-site tRNA stabilizing factor (88 aa).

One can recognise an S4 RNA-binding domain in the interval 1–60 (MRLDKYLKVSRIIKRRTVAKEVADKGRIKVNGILAKSSTDLKVNDQVEIRFGNKLLLVKV).

Belongs to the RqcP family. In terms of assembly, associates with stalled 50S ribosomal subunits. Binds to RqcH, 23S rRNA and the P-site tRNA. Does not require RqcH for association with 50S subunits.

Key component of the ribosome quality control system (RQC), a ribosome-associated complex that mediates the extraction of incompletely synthesized nascent chains from stalled ribosomes and their subsequent degradation. RqcH recruits Ala-charged tRNA, and with RqcP directs the elongation of stalled nascent chains on 50S ribosomal subunits, leading to non-templated C-terminal alanine extensions (Ala tail). The Ala tail promotes nascent chain degradation. RqcP is associated with the translocation-like movement of the peptidyl-tRNA from the A-site into the P-site. The polypeptide is RQC P-site tRNA stabilizing factor (Streptococcus pneumoniae (strain ATCC BAA-255 / R6)).